A 469-amino-acid polypeptide reads, in one-letter code: Glutamine synthetase (469 aa).

The 85-residue stretch at 13 to 97 folds into the GS beta-grasp domain; that stretch reads NEVKFVDLRF…IRCDILEPAT (85 aa). A GS catalytic domain is found at 105 to 469; that stretch reads PRSIAKRAEE…PLEFELYYSV (365 aa). Residues glutamate 130 and glutamate 132 each coordinate Mg(2+). Glutamate 208 is a binding site for ATP. Positions 213 and 221 each coordinate Mg(2+). L-glutamate-binding positions include 265–266 and glycine 266; that span reads NG. A Mg(2+)-binding site is contributed by histidine 270. ATP contacts are provided by residues 272 to 274 and serine 274; that span reads HQS. L-glutamate contacts are provided by arginine 322, glutamate 328, and arginine 340. ATP contacts are provided by arginine 340, arginine 345, and lysine 353. Glutamate 358 is a binding site for Mg(2+). Arginine 360 provides a ligand contact to L-glutamate. Tyrosine 398 bears the O-AMP-tyrosine mark.

It belongs to the glutamine synthetase family. In terms of assembly, oligomer of 12 subunits arranged in the form of two hexameric ring. Requires Mg(2+) as cofactor.

The protein resides in the cytoplasm. It catalyses the reaction L-glutamate + NH4(+) + ATP = L-glutamine + ADP + phosphate + H(+). Its activity is regulated as follows. The activity of this enzyme could be controlled by adenylation under conditions of abundant glutamine. Its function is as follows. Catalyzes the ATP-dependent biosynthesis of glutamine from glutamate and ammonia. The protein is Glutamine synthetase (glnAv) of Vibrio cholerae serotype O1 (strain ATCC 39315 / El Tor Inaba N16961).